Reading from the N-terminus, the 339-residue chain is MSSGRGSRIPEYWYGQVPVPPFMRFMEVIYAGAVSLRRLAYRRGWRRRYGVAVPVVVIGNLVAGGTGKTPLTIEIVARLREAGWTPGIASRGYGRRDPKTPRWIQPDTPIELAGDEPAMIAWKTGMRVRVDVDRSAAARALVAEGCDIVVCDDGLQHYRLMRDIEIEVIDGQRRYGNGHLLPAGPLREPMVRGRLCDFRVLNAGQYSDRPTSGFGPSDWQMRLHIDHAQSLQGSRRRSLDAFSGQRVHAVAGIAHPERFFSMLRQRGIGVVPHAFPDHHFYRAEDFTFGSRLPVLMTEKDAVKCRAFADDWFFSVPLRVELPTVFWTALFDRLERLVSC.

62–69 (VAGGTGKT) serves as a coordination point for ATP.

The protein belongs to the LpxK family.

The catalysed reaction is a lipid A disaccharide + ATP = a lipid IVA + ADP + H(+). It functions in the pathway glycolipid biosynthesis; lipid IV(A) biosynthesis; lipid IV(A) from (3R)-3-hydroxytetradecanoyl-[acyl-carrier-protein] and UDP-N-acetyl-alpha-D-glucosamine: step 6/6. In terms of biological role, transfers the gamma-phosphate of ATP to the 4'-position of a tetraacyldisaccharide 1-phosphate intermediate (termed DS-1-P) to form tetraacyldisaccharide 1,4'-bis-phosphate (lipid IVA). This is Tetraacyldisaccharide 4'-kinase from Xylella fastidiosa (strain M23).